Reading from the N-terminus, the 745-residue chain is F-box only protein 30 (745 aa).

The TRAF-type zinc finger occupies 48–109 (EHRLLCPFER…SYADRKSYEN (62 aa)). 2 disordered regions span residues 211-231 (NTSV…LEDQ) and 305-324 (GDSK…SDGT). Positions 222-231 (QNARESLEDQ) are enriched in basic and acidic residues. The segment covering 305–314 (GDSKQSNLTN) has biased composition (polar residues). The F-box domain maps to 610–658 (NDHLSSLPFEVLQHIAGFLDGFSLCQLSCVSKLMRDVCGSLLQSRGMVI).

As to quaternary structure, part of a SCF (SKP1-cullin-F-box) protein ligase complex. Interacts with SKP1, CUL1 and RBX1/ROC1. Auto-ubiquitinated. In terms of processing, may be neddylated. Neddylation may be required for E3 ligase activity.

Its pathway is protein modification; protein ubiquitination. Substrate-recognition component of the SCF (SKP1-CUL1-F-box protein)-type E3 ubiquitin ligase complex. Required for muscle atrophy following denervation. This chain is F-box only protein 30 (FBXO30), found in Homo sapiens (Human).